The primary structure comprises 428 residues: Glutamate-1-semialdehyde 2,1-aminomutase (428 aa).

The residue at position 267 (lysine 267) is an N6-(pyridoxal phosphate)lysine.

It belongs to the class-III pyridoxal-phosphate-dependent aminotransferase family. HemL subfamily. As to quaternary structure, homodimer. Pyridoxal 5'-phosphate is required as a cofactor.

The protein resides in the cytoplasm. It catalyses the reaction (S)-4-amino-5-oxopentanoate = 5-aminolevulinate. It participates in porphyrin-containing compound metabolism; protoporphyrin-IX biosynthesis; 5-aminolevulinate from L-glutamyl-tRNA(Glu): step 2/2. This is Glutamate-1-semialdehyde 2,1-aminomutase from Flavobacterium johnsoniae (strain ATCC 17061 / DSM 2064 / JCM 8514 / BCRC 14874 / CCUG 350202 / NBRC 14942 / NCIMB 11054 / UW101) (Cytophaga johnsonae).